A 2126-amino-acid polypeptide reads, in one-letter code: Phthioceranic/hydroxyphthioceranic acid synthase (2126 aa).

The Ketosynthase family 3 (KS3) domain occupies 24–447 (VTPVAVIGMA…GTNVHAVVEQ (424 aa)). Catalysis depends on C196, which acts as the Acyl-thioester intermediate; for beta-ketoacyl synthase activity. Residues H331 and H367 each act as for beta-ketoacyl synthase activity in the active site. Residues 449 to 549 (PQTEAQPHAA…VYQPAVGQDD (101 aa)) form a linker domain (LD) region. Residues 550-849 (RGPVWLFSGQ…VAALAGMRRE (300 aa)) form an acyltransferase (AT) region. S641 acts as the Acyl-ester intermediate; for acyltransferase activity in catalysis. The interval 909–1191 (STVAVHPLLG…LAVCGLRIGT (283 aa)) is dehydratase (DH). An N-terminal hotdog fold region spans residues 914-1032 (HPLLGAHVRL…RRASAVLQQV (119 aa)). Residues 914–1198 (HPLLGAHVRL…IGTGVSERDK (285 aa)) enclose the PKS/mFAS DH domain. The active-site Proton acceptor; for dehydratase activity is H947. The C-terminal hotdog fold stretch occupies residues 1051-1198 (PCRVDGEDLR…IGTGVSERDK (148 aa)). Catalysis depends on D1115, which acts as the Proton donor; for dehydratase activity. The segment at 1227 to 1398 (KWLLISDCAA…SEEDETAWRD (172 aa)) is pseudo beta-ketoacyl reductase (PsiKR). An enoylreductase (ER) region spans residues 1426–1750 (SGMRLQIRTP…EHTGKLVLHI (325 aa)). Positions 1772–2019 (GSYIITGGLG…AERSRFFEVF (248 aa)) are beta-ketoacyl reductase (KR). NADP(+) contacts are provided by residues 1780 to 1783 (LGGL), 1803 to 1806 (SRTQ), 1831 to 1832 (DI), and 1904 to 1905 (FS). Residues 2040-2126 (DEWPARLRQL…DAPAAALSSQ (87 aa)) enclose the Carrier domain. S2075 is modified (O-(pantetheine 4'-phosphoryl)serine).

Pantetheine 4'-phosphate is required as a cofactor.

It catalyses the reaction hexadecanoyl-[(hydroxy)phthioceranic acid synthase] + 7 (S)-methylmalonyl-CoA + 14 NADPH + 21 H(+) = C37-phthioceranyl-[(hydroxy)phthioceranic acid synthase] + 7 CO2 + 14 NADP(+) + 7 CoA + 7 H2O. The catalysed reaction is hexadecanoyl-[(hydroxy)phthioceranic acid synthase] + 8 (S)-methylmalonyl-CoA + 16 NADPH + 24 H(+) = C40-phthioceranyl-[(hydroxy)phthioceranic acid synthase] + 8 CO2 + 16 NADP(+) + 8 CoA + 8 H2O. It functions in the pathway lipid metabolism; fatty acid biosynthesis. Its pathway is glycolipid metabolism; sulfolipid-1 biosynthesis. Functionally, involved in sulfolipid-1 biosynthesis. Catalyzes the synthesis of the hepta- and octamethyl phthioceranic and hydroxyphthioceranic acids, the methyl-branched acyl constituents of sulfolipids. The polypeptide is Phthioceranic/hydroxyphthioceranic acid synthase (pks2) (Mycobacterium bovis (strain ATCC BAA-935 / AF2122/97)).